A 155-amino-acid polypeptide reads, in one-letter code: Transcription antitermination protein NusB (155 aa).

This sequence belongs to the NusB family.

Involved in transcription antitermination. Required for transcription of ribosomal RNA (rRNA) genes. Binds specifically to the boxA antiterminator sequence of the ribosomal RNA (rrn) operons. The protein is Transcription antitermination protein NusB of Azoarcus sp. (strain BH72).